Reading from the N-terminus, the 335-residue chain is MNKITNFLILSAVLFFSLIESANAARLKDIASIRGVRENQLIGYGIVVGLKGTGDGKNEFMSKSMVRMLDKLGMKLDNVDFASKNVAAVIVTATMPAFGKAGNPIDINVSAIGEASSLQGGTLLQTPLRAANEQVFAVAQGSIVIGGDGKDSHTTAGRIPNGATIERDMTADFSSRKMYRLTLINPDFTTAARSVLTINKELGGHYASAKDSGTIDIITPFAYENRGVELLATIESIEINPDMKARVVVNEKTGTIVIGDKVKISRVAISHGALSVKVGDGKKGAEEKVAVLDSGVSVGELVQALNKLGVSPKDLITILQSIKSAGALHGELEVL.

The first 24 residues, 1–24, serve as a signal peptide directing secretion; sequence MNKITNFLILSAVLFFSLIESANA.

Belongs to the FlgI family. As to quaternary structure, the basal body constitutes a major portion of the flagellar organelle and consists of four rings (L,P,S, and M) mounted on a central rod.

The protein localises to the periplasm. It localises to the bacterial flagellum basal body. Functionally, assembles around the rod to form the L-ring and probably protects the motor/basal body from shearing forces during rotation. This chain is Flagellar P-ring protein, found in Bdellovibrio bacteriovorus (strain ATCC 15356 / DSM 50701 / NCIMB 9529 / HD100).